The sequence spans 389 residues: Smad nuclear interacting protein 1 (389 aa).

Basic and acidic residues predominate over residues 1-10 (MKAGKSERER). The segment at 1–212 (MKAGKSERER…GNKNKEVPVK (212 aa)) is disordered. Residue serine 18 is modified to Phosphoserine. Lysine 28 participates in a covalent cross-link: Glycyl lysine isopeptide (Lys-Gly) (interchain with G-Cter in SUMO); alternate. Lysine 28 participates in a covalent cross-link: Glycyl lysine isopeptide (Lys-Gly) (interchain with G-Cter in SUMO1); alternate. Lysine 28 is covalently cross-linked (Glycyl lysine isopeptide (Lys-Gly) (interchain with G-Cter in SUMO2); alternate). The segment covering 28 to 43 (KQERLSPEPVAHRRPD) has biased composition (basic and acidic residues). 2 positions are modified to phosphoserine: serine 33 and serine 48. Positions 54 to 72 (AESGSAGHRGSRARGASRS) are enriched in low complexity. Residues 73–95 (PAKKKSKSSGRRSKSPRTKRSRS) show a composition bias toward basic residues. Phosphoserine is present on serine 95. Basic and acidic residues-rich tracts occupy residues 103 to 138 (VKQE…ERDR) and 147 to 163 (RSSD…DRDS). Lysine 104 participates in a covalent cross-link: Glycyl lysine isopeptide (Lys-Gly) (interchain with G-Cter in SUMO2). Position 149 is a phosphoserine (serine 149). Residues 166–197 (LQAQEEERDFNNARRREHRQQNESAGAEAQEV) are a coiled coil. A Glycyl lysine isopeptide (Lys-Gly) (interchain with G-Cter in SUMO2) cross-link involves residue lysine 214. The FHA domain occupies 272 to 335 (YLLGRHRRIA…NGTFLNNKRI (64 aa)). Residues 363–373 (ESSDTSELDRK) show a composition bias toward basic and acidic residues. Residues 363–389 (ESSDTSELDRKEDEDEEEEEEMVSDSS) form a disordered region. Residues 374-389 (EDEDEEEEEEMVSDSS) show a composition bias toward acidic residues. Serine 386 is subject to Phosphoserine.

As to quaternary structure, component of activated spliceosome complexes. Component of the minor spliceosome, which splices U12-type introns. Binds SMAD4 and CREBBP/EP300. Binds the SMAD1/OAZ1/PSMB4 complex. Interacts with DROSHA and SMARCA4. Component of the SNARP complex which consists at least of SNIP1, SNW1, THRAP3, BCLAF1 and PNN. Post-translationally, degraded by the proteasome upon binding to the SMAD1/OAZ1/PSMB4 complex.

It is found in the nucleus. In terms of biological role, required for pre-mRNA splicing as component of the spliceosome. As a component of the minor spliceosome, involved in the splicing of U12-type introns in pre-mRNAs. Down-regulates NF-kappa-B signaling by competing with RELA for CREBBP/EP300 binding. Involved in the microRNA (miRNA) biogenesis. May be involved in cyclin-D1/CCND1 mRNA stability through the SNARP complex which associates with both the 3'end of the CCND1 gene and its mRNA. This chain is Smad nuclear interacting protein 1 (Snip1), found in Rattus norvegicus (Rat).